The sequence spans 140 residues: Nucleoside diphosphate kinase (140 aa).

Positions 9, 57, 85, 91, 102, and 112 each coordinate ATP. The Pros-phosphohistidine intermediate role is filled by histidine 115.

This sequence belongs to the NDK family. In terms of assembly, homotetramer. Mg(2+) serves as cofactor.

Its subcellular location is the cytoplasm. It carries out the reaction a 2'-deoxyribonucleoside 5'-diphosphate + ATP = a 2'-deoxyribonucleoside 5'-triphosphate + ADP. It catalyses the reaction a ribonucleoside 5'-diphosphate + ATP = a ribonucleoside 5'-triphosphate + ADP. Functionally, major role in the synthesis of nucleoside triphosphates other than ATP. The ATP gamma phosphate is transferred to the NDP beta phosphate via a ping-pong mechanism, using a phosphorylated active-site intermediate. This Chlorobium limicola (strain DSM 245 / NBRC 103803 / 6330) protein is Nucleoside diphosphate kinase.